The primary structure comprises 285 residues: Nucleotide-binding protein CD630_34000 (285 aa).

8 to 15 (GLSGSGKS) is an ATP binding site. 59–62 (DIRG) is a GTP binding site.

This sequence belongs to the RapZ-like family.

Functionally, displays ATPase and GTPase activities. The sequence is that of Nucleotide-binding protein CD630_34000 from Clostridioides difficile (strain 630) (Peptoclostridium difficile).